The sequence spans 61 residues: Large ribosomal subunit protein uL30 (61 aa).

Belongs to the universal ribosomal protein uL30 family. As to quaternary structure, part of the 50S ribosomal subunit.

The polypeptide is Large ribosomal subunit protein uL30 (Corynebacterium aurimucosum (strain ATCC 700975 / DSM 44827 / CIP 107346 / CN-1) (Corynebacterium nigricans)).